The following is a 108-amino-acid chain: Small ribosomal subunit protein uS17 (108 aa).

This sequence belongs to the universal ribosomal protein uS17 family. As to quaternary structure, part of the 30S ribosomal subunit.

In terms of biological role, one of the primary rRNA binding proteins, it binds specifically to the 5'-end of 16S ribosomal RNA. This is Small ribosomal subunit protein uS17 from Methanospirillum hungatei JF-1 (strain ATCC 27890 / DSM 864 / NBRC 100397 / JF-1).